Reading from the N-terminus, the 551-residue chain is Thermolysin (551 aa).

The signal sequence occupies residues 1-31 (MKRKMKMKLVRFGLAAGLAAQVFFLPYNALA). A propeptide spans 32–235 (STEHVTWNQQ…DAAKPGDVKS (204 aa)) (activation peptide). Residues Asp-292, Asp-294, Gln-296, and Asp-373 each coordinate Ca(2+). His-377 is a Zn(2+) binding site. Glu-378 is a catalytic residue. His-381 and Glu-401 together coordinate Zn(2+). The Ca(2+) site is built by Glu-412, Asn-418, Asp-420, Glu-422, Glu-425, Thr-429, Ile-432, and Asp-435. His-466 acts as the Proton donor in catalysis.

It belongs to the peptidase M4 family. The cofactor is Ca(2+). Requires Zn(2+) as cofactor.

It localises to the secreted. It carries out the reaction Preferential cleavage: Xaa-|-Leu &gt; Xaa-|-Phe.. Functionally, extracellular zinc metalloprotease. The polypeptide is Thermolysin (nprS) (Geobacillus stearothermophilus (Bacillus stearothermophilus)).